A 312-amino-acid chain; its full sequence is Serine/threonine-protein phosphatase PP1 isozyme 2 (312 aa).

Alanine 2 bears the N-acetylalanine mark. Positions 70, 72, 98, and 130 each coordinate Mn(2+). The active-site Proton donor is histidine 131. 2 residues coordinate Mn(2+): histidine 179 and histidine 254.

This sequence belongs to the PPP phosphatase family. PP-1 subfamily. In terms of assembly, interacts with SRK2D/SNRK2.2 and SRK2E/SNRK2.6. Requires Mn(2+) as cofactor.

It is found in the nucleus. The protein localises to the cytoplasm. It catalyses the reaction O-phospho-L-seryl-[protein] + H2O = L-seryl-[protein] + phosphate. The catalysed reaction is O-phospho-L-threonyl-[protein] + H2O = L-threonyl-[protein] + phosphate. With respect to regulation, phosphatase activity is strongly reduced by the protein phosphatase inhibitor 2 (I-2). Functionally, serine/threonine-protein phosphatase that possesses phosphatase activity toward para-nitrophenyl phosphate (pNPP) in vitro. This is Serine/threonine-protein phosphatase PP1 isozyme 2 from Arabidopsis thaliana (Mouse-ear cress).